The primary structure comprises 125 residues: Lymphocyte antigen 6 complex locus protein G6c (125 aa).

The signal sequence occupies residues 1–18; sequence MKALMLLTLSVLLCWVSA. Residues 20–111 form the UPAR/Ly6 domain; it reads IRCHSCYKVP…PRPTPALGLV (92 aa). 3 cysteine pairs are disulfide-bonded: Cys22–Cys47, Cys25–Cys33, and Cys39–Cys65. Asn88 carries an N-linked (GlcNAc...) asparagine glycan. A disulfide bond links Cys92 and Cys97. The GPI-anchor amidated serine moiety is linked to residue Ser99. Positions 100–125 are cleaved as a propeptide — removed in mature form; the sequence is AGPRPTPALGLVFLTSLAGLGLWLLH.

As to quaternary structure, monomer. N-glycosylated. In terms of tissue distribution, highly expressed at the leading edges of cells, on filopodia.

The protein localises to the cell membrane. In Homo sapiens (Human), this protein is Lymphocyte antigen 6 complex locus protein G6c (LY6G6C).